The primary structure comprises 406 residues: Enoyl-[acyl-carrier-protein] reductase [NADH] (406 aa).

NAD(+)-binding positions include 48–53, 74–75, 111–112, and 140–141; these read GASTGF, FE, DA, and IA. Tyrosine 226 serves as a coordination point for substrate. Tyrosine 236 (proton donor) is an active-site residue. NAD(+) contacts are provided by residues lysine 245 and 275–277; that span reads LVT.

It belongs to the TER reductase family. In terms of assembly, monomer.

It carries out the reaction a 2,3-saturated acyl-[ACP] + NAD(+) = a (2E)-enoyl-[ACP] + NADH + H(+). Its pathway is lipid metabolism; fatty acid biosynthesis. Its function is as follows. Involved in the final reduction of the elongation cycle of fatty acid synthesis (FAS II). Catalyzes the reduction of a carbon-carbon double bond in an enoyl moiety that is covalently linked to an acyl carrier protein (ACP). This is Enoyl-[acyl-carrier-protein] reductase [NADH] from Coxiella burnetii (strain CbuK_Q154) (Coxiella burnetii (strain Q154)).